Consider the following 423-residue polypeptide: COP9 signalosome complex subunit 3 (423 aa).

Alanine 2 is modified (N-acetylalanine). Residues 197-365 (NFERALYFYE…GMVSFHDNPE (169 aa)) enclose the PCI domain. Positions 402-423 (QFVQKSMGSQEDDSGNKPSSYS) are disordered. Serine 407, serine 410, and serine 423 each carry phosphoserine.

The protein belongs to the CSN3 family. Component of the CSN complex, composed of COPS1/GPS1, COPS2, COPS3, COPS4, COPS5, COPS6, COPS7 (COPS7A or COPS7B), COPS8 and COPS9 isoform 1. In the complex, it probably interacts directly with COPS1, COPS4, COPS8 and COPS9 isoform 1. Interacts with CK2 and PKD. Interacts with the translation initiation factor EIF3S6 and IKBKG. Interacts with ERCC6. In terms of tissue distribution, widely expressed. Expressed at high level in heart and skeletal muscle.

Its subcellular location is the cytoplasm. It is found in the nucleus. Its function is as follows. Component of the COP9 signalosome complex (CSN), a complex involved in various cellular and developmental processes. The CSN complex is an essential regulator of the ubiquitin (Ubl) conjugation pathway by mediating the deneddylation of the cullin subunits of SCF-type E3 ligase complexes, leading to decrease the Ubl ligase activity of SCF-type complexes such as SCF, CSA or DDB2. The complex is also involved in phosphorylation of p53/TP53, c-jun/JUN, IkappaBalpha/NFKBIA, ITPK1 and IRF8/ICSBP, possibly via its association with CK2 and PKD kinases. CSN-dependent phosphorylation of TP53 and JUN promotes and protects degradation by the Ubl system, respectively. This chain is COP9 signalosome complex subunit 3 (COPS3), found in Homo sapiens (Human).